We begin with the raw amino-acid sequence, 515 residues long: ATP synthase subunit alpha (515 aa).

Position 171 to 178 (171 to 178 (GDRQTGKT)) interacts with ATP.

This sequence belongs to the ATPase alpha/beta chains family. As to quaternary structure, F-type ATPases have 2 components, CF(1) - the catalytic core - and CF(0) - the membrane proton channel. CF(1) has five subunits: alpha(3), beta(3), gamma(1), delta(1), epsilon(1). CF(0) has three main subunits: a(1), b(2) and c(9-12). The alpha and beta chains form an alternating ring which encloses part of the gamma chain. CF(1) is attached to CF(0) by a central stalk formed by the gamma and epsilon chains, while a peripheral stalk is formed by the delta and b chains.

It is found in the cell membrane. It carries out the reaction ATP + H2O + 4 H(+)(in) = ADP + phosphate + 5 H(+)(out). Produces ATP from ADP in the presence of a proton gradient across the membrane. The alpha chain is a regulatory subunit. This is ATP synthase subunit alpha from Stenotrophomonas maltophilia (strain K279a).